The following is a 560-amino-acid chain: Dihydroxy-acid dehydratase (560 aa).

Residue Asp78 coordinates Mg(2+). Cys119 is a [2Fe-2S] cluster binding site. Mg(2+)-binding residues include Asp120 and Lys121. An N6-carboxylysine modification is found at Lys121. Cys192 lines the [2Fe-2S] cluster pocket. Glu446 serves as a coordination point for Mg(2+). Catalysis depends on Ser472, which acts as the Proton acceptor.

Belongs to the IlvD/Edd family. As to quaternary structure, homodimer. [2Fe-2S] cluster serves as cofactor. Requires Mg(2+) as cofactor.

The catalysed reaction is (2R)-2,3-dihydroxy-3-methylbutanoate = 3-methyl-2-oxobutanoate + H2O. It catalyses the reaction (2R,3R)-2,3-dihydroxy-3-methylpentanoate = (S)-3-methyl-2-oxopentanoate + H2O. It participates in amino-acid biosynthesis; L-isoleucine biosynthesis; L-isoleucine from 2-oxobutanoate: step 3/4. It functions in the pathway amino-acid biosynthesis; L-valine biosynthesis; L-valine from pyruvate: step 3/4. Functions in the biosynthesis of branched-chain amino acids. Catalyzes the dehydration of (2R,3R)-2,3-dihydroxy-3-methylpentanoate (2,3-dihydroxy-3-methylvalerate) into 2-oxo-3-methylpentanoate (2-oxo-3-methylvalerate) and of (2R)-2,3-dihydroxy-3-methylbutanoate (2,3-dihydroxyisovalerate) into 2-oxo-3-methylbutanoate (2-oxoisovalerate), the penultimate precursor to L-isoleucine and L-valine, respectively. This chain is Dihydroxy-acid dehydratase, found in Anaeromyxobacter dehalogenans (strain 2CP-1 / ATCC BAA-258).